We begin with the raw amino-acid sequence, 369 residues long: Tsukushi (369 aa).

The signal sequence occupies residues 1 to 19; sequence MQFLAWFNMLLLLPCFSTT. Residues 20 to 60 form the LRRNT domain; that stretch reads KTCFPGCHCEVESFGLFDSFSLTKVDCSGIGSHIVPVPIPL. LRR repeat units follow at residues 61–81, 87–108, 111–132, 134–155, 161–181, 184–205, 206–226, 229–248, 254–276, 279–300, and 303–323; these read DTSY…SMLT, TLVS…TFSR, YLES…CFSS, PLGD…VFAS, PLNV…HEKS, NIQN…QGIP, LRYL…DFKG, GLIH…SPYS, ALQV…VIFG, SIQE…VLKY, and SLKS…KEGQ. A glycan (N-linked (GlcNAc...) asparagine) is linked at N76. An N-linked (GlcNAc...) asparagine glycan is attached at N189. N-linked (GlcNAc...) asparagine glycosylation occurs at N284.

Forms a ternary complex with chordin/CHRD and BMP4. As to quaternary structure, interacts with FZD4 (via FZ domain); competes with WNT2B for binding to FZD4, inhibiting Wnt signaling and repressing peripheral eye development. Interacts with BMP4; shows stronger interaction with BMP4 than isoform 2. Interacts with DVR1/VG1; the interaction is inhibited by BMP4. Interacts with BMP7. In terms of assembly, interacts with FZD4 (via FZ domain); competes with WNT2B for binding to FZD4, inhibiting Wnt signaling and repressing peripheral eye development. Interacts with BMP4; shows weaker interaction with BMP4 than isoform 1. Interacts with DVR1/VG1; the interaction is inhibited by BMP4. Interacts with BMP7. Post-translationally, N-glycosylated. During embryonic development, expressed in the middle primitive streak and Hensen's node. Expressed in the peripheral region of the developing eye. Expressed in the presomitic mesoderm during somitogenesis in a NOTCH-dependent manner.

The protein localises to the secreted. Functionally, contributes to various developmental events through its interactions with multiple signaling pathways. Dorsalizing factor involved in the induction of Hensen's node by inhibiting bone morphogenetic proteins during gastrulation and by enhancing DVR1/VG1 activity. Wnt signaling inhibitor which competes with WNT2B for binding to Wnt receptor FZD4 and represses WNT2B-dependent development of the peripheral eye. Its function is as follows. Shows strong bone morphogenetic protein antagonistic activity. In terms of biological role, shows weak bone morphogenetic protein antagonistic activity. This is Tsukushi (TSKU) from Gallus gallus (Chicken).